Reading from the N-terminus, the 178-residue chain is Probable DNA-directed RNA polymerase subunit delta (178 aa).

The HTH HARE-type domain occupies 14–81; that stretch reads KSFIDMAYTL…GENLWGLRDW (68 aa). The interval 114–178 is disordered; it reads LGDDDADEDD…AFEDAEDFND (65 aa). Residues 116–178 show a composition bias toward acidic residues; sequence DDDADEDDDI…AFEDAEDFND (63 aa).

This sequence belongs to the RpoE family. In terms of assembly, RNAP is composed of a core of 2 alpha, a beta and a beta' subunits. The core is associated with a delta subunit and one of several sigma factors.

In terms of biological role, participates in both the initiation and recycling phases of transcription. In the presence of the delta subunit, RNAP displays an increased specificity of transcription, a decreased affinity for nucleic acids, and an increased efficiency of RNA synthesis because of enhanced recycling. The chain is Probable DNA-directed RNA polymerase subunit delta from Staphylococcus epidermidis (strain ATCC 35984 / DSM 28319 / BCRC 17069 / CCUG 31568 / BM 3577 / RP62A).